The primary structure comprises 100 residues: Small ribosomal subunit protein uS14c (100 aa).

It belongs to the universal ribosomal protein uS14 family. Part of the 30S ribosomal subunit.

Its subcellular location is the plastid. The protein resides in the chloroplast. Its function is as follows. Binds 16S rRNA, required for the assembly of 30S particles. The protein is Small ribosomal subunit protein uS14c of Calycanthus floridus var. glaucus (Eastern sweetshrub).